An 872-amino-acid polypeptide reads, in one-letter code: Metabotropic glutamate receptor 2 (872 aa).

The signal sequence occupies residues 1-18; the sequence is MESLLGFLALLLLWGAVA. At 19 to 567 the chain is on the extracellular side; it reads EGPAKKVLTL…QEYIRWGDAW (549 aa). The cysteines at positions 50 and 92 are disulfide-linked. L-glutamate-binding residues include arginine 57, arginine 61, serine 145, alanine 166, and threonine 168. N-linked (GlcNAc...) asparagine glycosylation is found at asparagine 203 and asparagine 286. 7 cysteine pairs are disulfide-bonded: cysteine 234–cysteine 518, cysteine 355–cysteine 362, cysteine 400–cysteine 407, cysteine 500–cysteine 519, cysteine 504–cysteine 522, cysteine 525–cysteine 537, and cysteine 540–cysteine 553. Aspartate 295 contributes to the L-glutamate binding site. N-linked (GlcNAc...) asparagine glycosylation occurs at asparagine 338. Lysine 377 contacts L-glutamate. A glycan (N-linked (GlcNAc...) asparagine) is linked at asparagine 402. The N-linked (GlcNAc...) asparagine glycan is linked to asparagine 547. Residues 568–590 traverse the membrane as a helical segment; the sequence is AVGPVTIACLGALATLFVLGVFV. Over 591 to 604 the chain is Cytoplasmic; the sequence is RHNATPVVKASGRE. Residues 605 to 625 traverse the membrane as a helical segment; it reads LCYILLGGVFLCYCMTFVFIA. Over 626 to 636 the chain is Extracellular; sequence KPSTAVCTLRR. Cysteine 632 and cysteine 721 are joined by a disulfide. Residues 637–655 form a helical membrane-spanning segment; the sequence is LGLGTAFSVCYSALLTKTN. At 656–679 the chain is on the cytoplasmic side; sequence RIARIFGGAREGAQRPRFISPASQ. Residues 677–685 are important for interaction with HTR2A; that stretch reads ASQVAICLA. Residues 680–700 form a helical membrane-spanning segment; it reads VAICLALISGQLLIVAAWLVV. Over 701 to 725 the chain is Extracellular; that stretch reads EAPGTGKETAPERREVVTLRCNHRD. A helical transmembrane segment spans residues 726-747; the sequence is ASMLGSLAYNVLLIALCTLYAF. Residues 748–760 are Cytoplasmic-facing; it reads KTRKCPENFNEAK. The helical transmembrane segment at 761–783 threads the bilayer; sequence FIGFTMYTTCIIWLAFLPIFYVT. Residues 784–793 are Extracellular-facing; the sequence is SSDYRVQTTT. A helical membrane pass occupies residues 794 to 819; sequence MCVSVSLSGSVVLGCLFAPKLHIILF. Topologically, residues 820-872 are cytoplasmic; sequence QPQKNVVSHRAPTSRFGSAAPRASANLGQGSGSQFVPTVCNGREVVDSTTSSL.

It belongs to the G-protein coupled receptor 3 family. Forms heterodimers with GRM3 or GRM4. Interacts with GNAI1. Interacts with TAMALIN. Interacts with HTR2A. As to expression, is widely distributed in the CNS and prominent expression is seen in Golgi cells of the cerebellum and some particular neuronal cells in other brain regions.

It localises to the cell membrane. Its subcellular location is the synapse. The protein resides in the cell projection. It is found in the dendrite. In terms of biological role, dimeric G protein-coupled receptor which is activated by the excitatory neurotransmitter L-glutamate. Plays critical roles in modulating synaptic transmission and neuronal excitability. Upon activation by glutamate, inhibits presynaptic calcium channels, reducing further glutamate release and dampening excitatory signaling. Mechanistically, ligand binding causes a conformation change that triggers signaling via guanine nucleotide-binding proteins (G proteins) and modulates the activity of down-stream effectors, such as adenylate cyclase. May mediate suppression of neurotransmission or may be involved in synaptogenesis or synaptic stabilization. The polypeptide is Metabotropic glutamate receptor 2 (Grm2) (Rattus norvegicus (Rat)).